A 637-amino-acid chain; its full sequence is Threonine--tRNA ligase (637 aa).

Residues M1 to T61 enclose the TGS domain. Residues D242–P532 form a catalytic region. 3 residues coordinate Zn(2+): C333, H384, and H509.

The protein belongs to the class-II aminoacyl-tRNA synthetase family. Homodimer. Zn(2+) is required as a cofactor.

The protein resides in the cytoplasm. It carries out the reaction tRNA(Thr) + L-threonine + ATP = L-threonyl-tRNA(Thr) + AMP + diphosphate + H(+). Catalyzes the attachment of threonine to tRNA(Thr) in a two-step reaction: L-threonine is first activated by ATP to form Thr-AMP and then transferred to the acceptor end of tRNA(Thr). Also edits incorrectly charged L-seryl-tRNA(Thr). This Clostridium kluyveri (strain NBRC 12016) protein is Threonine--tRNA ligase.